Reading from the N-terminus, the 1379-residue chain is MAERANLVFHNKVIDGTAIKRLISRLIDHFGMAYTSHILDQVKTLGFQQATATSISLGIDDLLTIPSKGWLVQDAEQQSLILEKHHHYGNVHAVEKLRQSIEIWYATSEYLRQEMNPNFRMTDPLNPVHMMSFSGARGNASQVHQLVGMRGLMSDPQGQMIDLPIQSNLREGLSLTEYIISCYGARKGVVDTAVRTSDAGYLTRRLVEVVQHIVVRRTDCGTIRGISVSPRNKNRMMSERIFIQTLIGRVLADDIYIGSRCVAFRNQDLGIGLVNRLITFGTQSISIRTPFTCRSTSWICRLCYGRSPTHGDLVELGEAVGIIAGQSIGEPGTQLTLRTFHTGGVFTGGTAEHVRAPYNGKIKFNEDLVHPTRTRHGHPAFLCYIDLSVIIESEDIIHSVTIPPKSFLLVQNDQYVESEQVIAEIREGTHTFHFKERVRKYIYSDSEGEMHWSTDVSHAPEFTYSNVHLLPKTSHLWILSGGSCGSSLILFSIHKDQDQMNIPFLSVERKSISSLSVNNDQVSQNFLSSDFADKKKSGIPHYSELNGNLGTSHYNFIYSAIFHENSDLLAKRRRNRFLIPFQSIQEQEKEFIPHSGISIEIPINGIFRRNSIFAFFDDPRYRRKSSGILKYGTLKADSIIQKEDMIEYRGVQKFKTKYEMKVDRFFFIPEEVHILPESSAIMVQNYSIIGVDTRITLNLRSRVGGLIRVERKKKRIELKIFSGDIHFPDKTDKISRHSGILIPPGRGKTNSKESKKLKNWIYVQRITPTKKKFFVLVRPVATYEIADSINLATLFPQDLFQEKDNIQLRVFNYILYGNGKPTRGISDTSIQLVRTCLVLNWDQENKNSSVEEVRAFFVEVSTKGLIRDFIRIGLVKSHMSYIRKRNNTPDSGLISADNMNPVYSISPKVGIFQQSLRQNHGTIRMFLNRNKESQSLLILSASNCFRIGPFNHVKYHNVINQSIKKNPLITIKNSPGPLGTSIQISNFFSFLPLLTYNLISVIKYLQLDNLKYIFQVINSYLIDENGRIFNLDPYNNVVLNPFKLNWYFLHKNYHHNYCEETSTIISLGQFFCENVCIAKNEPHLKSGQVLIVQRDSVVIRSAKPYLATPGAKVHGHYREILYEGDTLVTFIYEKSRSGDITQGLPKVEQVLEVRAIDSISLNLEKRIKGWNKCITRILGIPWGFLIGAELTIVQSRISLVNKIQKVYRSQGVQIHNRHIEIIVRQITSKVLVSEEGMSNVFLPGELIGLLRAERTGRALEEAICYRAVLLGITRASLNTQSFISEASFQETSRVLAKAALRGRIDWLKGLKENVVLGGVIPAGTGFNKGLVHCSRQYTNILLEKKKKNLSLFEGDMRDILFYHREFCDSSISKSDFSRI.

Zn(2+) contacts are provided by Cys220, Cys293, Cys300, and Cys303.

The protein belongs to the RNA polymerase beta' chain family. RpoC2 subfamily. In terms of assembly, in plastids the minimal PEP RNA polymerase catalytic core is composed of four subunits: alpha, beta, beta', and beta''. When a (nuclear-encoded) sigma factor is associated with the core the holoenzyme is formed, which can initiate transcription. Zn(2+) serves as cofactor.

The protein localises to the plastid. The protein resides in the chloroplast. It carries out the reaction RNA(n) + a ribonucleoside 5'-triphosphate = RNA(n+1) + diphosphate. Functionally, DNA-dependent RNA polymerase catalyzes the transcription of DNA into RNA using the four ribonucleoside triphosphates as substrates. The chain is DNA-directed RNA polymerase subunit beta'' from Barbarea verna (Land cress).